The primary structure comprises 547 residues: Undecaprenyl phosphate-alpha-4-amino-4-deoxy-L-arabinose arabinosyl transferase (547 aa).

The next 11 helical transmembrane spans lie at 1–21, 83–103, 111–131, 174–194, 205–225, 253–273, 286–306, 311–331, 346–366, 378–398, and 408–428; these read MKLT…LPLD, FASA…ALQL, FLAG…TYSV, FLTK…PYVI, FGPL…IAVH, APFW…LGLL, ISPE…FFSV, LLTY…ASAV, AWLN…LALS, GALA…FIQL, and SALC…QSLI.

Belongs to the glycosyltransferase 83 family.

It localises to the cell inner membrane. It catalyses the reaction 4-amino-4-deoxy-alpha-L-arabinopyranosyl di-trans,octa-cis-undecaprenyl phosphate + lipid IVA = lipid IIA + di-trans,octa-cis-undecaprenyl phosphate.. It functions in the pathway lipopolysaccharide metabolism; 4-amino-4-deoxy-beta-L-arabinose-lipid A biosynthesis. Catalyzes the transfer of the L-Ara4N moiety of the glycolipid undecaprenyl phosphate-alpha-L-Ara4N to lipid A. The modified arabinose is attached to lipid A and is required for resistance to polymyxin and cationic antimicrobial peptides. This Aeromonas salmonicida (strain A449) protein is Undecaprenyl phosphate-alpha-4-amino-4-deoxy-L-arabinose arabinosyl transferase.